The chain runs to 3907 residues: Cyclo-acetoacetyl-L-tryptophan synthase (3907 aa).

Residues 2 to 436 form the Ketosynthase family 3 (KS3) domain; the sequence is KTPIAVVGTA…GTNAHAIIES (435 aa). Residues Cys-176, His-313, and His-356 each act as for beta-ketoacyl synthase activity in the active site. The malonyl-CoA:ACP transacylase (MAT) domain stretch occupies residues 555–870; the sequence is IFTGQGAQWA…SLLRRGQNDL (316 aa). The N-terminal hotdog fold stretch occupies residues 937–1074; that stretch reads HPLLGRRSAD…ARLTLHLGDA (138 aa). The interval 937 to 1236 is dehydratase (DH) domain; that stretch reads HPLLGRRSAD…GLVMKSVPQP (300 aa). The PKS/mFAS DH domain occupies 937 to 1239; the sequence is HPLLGRRSAD…MKSVPQPDTS (303 aa). Residues 1092 to 1239 form a C-terminal hotdog fold region; sequence LAPVDVADLY…MKSVPQPDTS (148 aa). The tract at residues 1386 to 1573 is methyltransferase (MT) domain; the sequence is AAMFSQLSKD…FSGIDHIFHD (188 aa). Positions 2064–2238 are ketoreductase (KR)domain; that stretch reads GTYFMIDMAT…VGSVMALGMV (175 aa). The segment at 2324-2352 is disordered; sequence TKEGQYAEQEDSPSLLVPDEQLQESGPGR. The 75-residue stretch at 2356–2430 folds into the Carrier 1 domain; the sequence is DDLLARLSGK…LCEKAVPKPN (75 aa). An O-(pantetheine 4'-phosphoryl)serine modification is found at Ser-2390. A condensation region spans residues 2504 to 2926; sequence MSPHQSQIWF…SSNPLISVQS (423 aa). Residues 2959–3359 are adenylation; the sequence is FQDMVDQYGD…GSLILLGRMD (401 aa). The Carrier 2 domain maps to 3474 to 3549; the sequence is KRLTLGEGEL…QMALKVDARK (76 aa). Ser-3509 is subject to O-(pantetheine 4'-phosphoryl)serine. Positions 3594 to 3813 are reductase (RED) domain; the sequence is LTGSTSFLGR…DFQKVEIIAE (220 aa).

It in the C-terminal section; belongs to the NRP synthetase family.

It carries out the reaction L-tryptophan + malonyl-CoA + acetyl-CoA = cyclo-acetoacetyl-L-tryptophan + CO2 + 2 CoA + H2O. It functions in the pathway secondary metabolite biosynthesis. Hybrid PKS-NRPS synthetase; part of the gene cluster that mediates the biosynthesis of the fungal neurotoxin cyclopiazonic acid (CPA), a nanomolar inhibitor of Ca(2+)-ATPase with a unique pentacyclic indole tetramic acid scaffold. The hybrid two module polyketide synthase-nonribosomal peptide synthetase (PKS-NRPS) cpaS incorporates acetyl-CoA, malonyl-CoA, and tryptophan (Trp) and utilizes a C-terminal redox-incompetent reductase domain to make and release the tryptophan tetramic acid, cyclo-acetoacetyl-L-tryptophan (c-AATrp), as the first intermediate in the pathway. CpaS catalyzes a Dieckmann-type cyclization on the N-acetoacetyl-Trp intermediate bound in thioester linkage to the phosphopantetheinyl arm of the T domain to form and release c-AATrp. CpaD then regiospecifically dimethylallylates c-AATrp to form beta-cyclopiazonic acid. CpaD discriminates against free Trp but accepts tryptophan-containing thiohydantoins, diketopiperazines, and linear peptides as substrates for C4-prenylation and also acts as regiospecific O-dimethylallyltransferase (DMAT) on a tyrosine-derived tetramic acid. The beta-cyclopiazonate dehydrogenase cpaO then carries out the dehydrogenation of beta-CPA to yield an unstable enimine product, which is captured by intramolecular cyclization to create the pentacyclic fused scaffold of alpha-cyclopiazonate. Finally, the cytochrome P450 monooxygenase cpaH mediates the conversion of CPA into the less toxic 2-oxocyclopiazonic acid, the end product of the CPA pathway in A.oryza. The sequence is that of Cyclo-acetoacetyl-L-tryptophan synthase from Aspergillus oryzae (Yellow koji mold).